Here is a 156-residue protein sequence, read N- to C-terminus: Ribosomal RNA large subunit methyltransferase H (156 aa).

S-adenosyl-L-methionine contacts are provided by residues Leu-73, Gly-104, and 123–128 (LSALTL).

Belongs to the RNA methyltransferase RlmH family. As to quaternary structure, homodimer.

The protein localises to the cytoplasm. It catalyses the reaction pseudouridine(1915) in 23S rRNA + S-adenosyl-L-methionine = N(3)-methylpseudouridine(1915) in 23S rRNA + S-adenosyl-L-homocysteine + H(+). Specifically methylates the pseudouridine at position 1915 (m3Psi1915) in 23S rRNA. The chain is Ribosomal RNA large subunit methyltransferase H from Shewanella sp. (strain ANA-3).